The sequence spans 388 residues: Lysocardiolipin acyltransferase 1 (388 aa).

The next 2 helical transmembrane spans lie at 9–29 and 46–66; these read FLLF…GPLL and IVAT…GVKV. The HXXXXD motif motif lies at 85–90; the sequence is HRTRLD. Helical transmembrane passes span 321 to 341 and 342 to 362; these read IILV…CASL and CLCP…LCQQ.

This sequence belongs to the 1-acyl-sn-glycerol-3-phosphate acyltransferase family.

The protein resides in the endoplasmic reticulum membrane. It catalyses the reaction a 1-acyl-sn-glycero-3-phosphate + an acyl-CoA = a 1,2-diacyl-sn-glycero-3-phosphate + CoA. The catalysed reaction is a 1-acyl-sn-glycero-3-phospho-(1D-myo-inositol) + an acyl-CoA = a 1,2-diacyl-sn-glycero-3-phospho-(1D-myo-inositol) + CoA. It carries out the reaction 1-acyl-sn-glycero-3-phospho-(1'-sn-glycerol) + an acyl-CoA = a 1,2-diacyl-sn-glycero-3-phospho-(1'-sn-glycerol) + CoA. The enzyme catalyses 1-hexadecanoyl-sn-glycero-3-phosphate + (9Z)-octadecenoyl-CoA = 1-hexadecanoyl-2-(9Z-octadecenoyl)-sn-glycero-3-phosphate + CoA. It catalyses the reaction 1-(9Z-octadecenoyl)-sn-glycero-3-phosphate + (9Z)-octadecenoyl-CoA = 1,2-di-(9Z-octadecenoyl)-sn-glycero-3-phosphate + CoA. The catalysed reaction is 1-(9Z,12Z)-octadecadienoyl-sn-glycero-3-phosphate + (9Z)-octadecenoyl-CoA = 1-(9Z,12Z)-octadecadienoyl-2-(9Z)-octadecenoyl-sn-glycero-3-phosphate + CoA. It carries out the reaction 1-(9Z,12Z,15Z)-octadecatrienoyl-sn-glycero-3-phosphate + (9Z)-octadecenoyl-CoA = 1-(9Z,12Z,15Z)-octadecatrienoyl-2-(9Z)-octadecenoyl-sn-glycero-3-phosphate + CoA. The enzyme catalyses 1-(9Z-octadecenoyl)-sn-glycero-3-phosphate + hexadecanoyl-CoA = 1-(9Z)-octadecenoyl-2-hexadecanoyl-sn-glycero-3-phosphate + CoA. It catalyses the reaction 1-(9Z-octadecenoyl)-sn-glycero-3-phosphate + octadecanoyl-CoA = 1-(9Z-octadecenoyl)-2-octadecanoyl-sn-glycero-3-phosphate + CoA. The catalysed reaction is 1-acyl-sn-glycero-3-phospho-(1'-sn-glycerol) + (9Z)-octadecenoyl-CoA = 1-acyl-2-(9Z-octadecenoyl)-sn-glycero-3-phospho-(1'-sn-glycerol) + CoA. It carries out the reaction a 1-acyl-sn-glycero-3-phospho-(1D-myo-inositol) + (9Z)-octadecenoyl-CoA = a 1-acyl-2-(9Z-octadecenoyl)-sn-glycero-3-phospho-(1D-myo-inositol) + CoA. The enzyme catalyses 1-hexadecanoyl-sn-glycero-3-phospho-(1D-myo-inositol) + hexadecanoyl-CoA = 1,2-dihexadecanoyl-sn-glycero-3-phospho-(1D-myo-inositol) + CoA. It catalyses the reaction 1-hexadecanoyl-sn-glycero-3-phospho-(1D-myo-inositol) + octadecanoyl-CoA = 1-hexadecanoyl-2-octadecanoyl-sn-glycero-3-phospho-(1D-myo-inositol) + CoA. The catalysed reaction is 1-hexadecanoyl-sn-glycero-3-phospho-(1D-myo-inositol) + (9Z)-octadecenoyl-CoA = 1-hexadecanoyl-2-(9Z-octadecenoyl)-sn-glycero-3-phospho-(1D-myo-inositol) + CoA. It carries out the reaction 1-hexadecanoyl-sn-glycero-3-phospho-(1D-myo-inositol) + (9Z,12Z)-octadecadienoyl-CoA = 1-hexadecanoyl-2-(9Z,12Z-octadecadienoyl)-sn-glycero-3-phospho-(1D-myo-inositol) + CoA. The enzyme catalyses 1-hexadecanoyl-sn-glycero-3-phospho-(1D-myo-inositol) + (5Z,8Z,11Z,14Z)-eicosatetraenoyl-CoA = 1-hexadecanoyl-2-(5Z,8Z,11Z,14Z-eicosatetraenoyl)-sn-glycero-3-phospho-D-myo-inositol + CoA. It catalyses the reaction 1-hexadecanoyl-sn-glycero-3-phospho-(1'-sn-glycerol) + hexadecanoyl-CoA = 1,2-dihexadecanoyl-sn-glycero-3-phospho-(1'-sn-glycerol) + CoA. The catalysed reaction is 1-hexadecanoyl-sn-glycero-3-phospho-(1'-sn-glycerol) + octadecanoyl-CoA = 1-hexadecanoyl-2-octadecanoyl-sn-glycero-3-phospho-(1'-sn-glycerol) + CoA. It carries out the reaction 1-hexadecanoyl-sn-glycero-3-phospho-(1'-sn-glycerol) + (9Z)-octadecenoyl-CoA = 1-hexadecanoyl-2-(9Z-octadecenoyl)-sn-glycero-3-phospho-(1'-sn-glycerol) + CoA. The enzyme catalyses 1-hexadecanoyl-sn-glycero-3-phospho-(1'-sn-glycerol) + (9Z,12Z)-octadecadienoyl-CoA = 1-hexadecanoyl-2-(9Z,12Z-octadecadienoyl)-sn-glycero-3-phospho-(1'-sn-glycerol) + CoA. It catalyses the reaction 1-tetradecanoyl-sn-glycero-3-phospho-(1'-sn-glycerol) + (9Z)-octadecenoyl-CoA = 1-tetradecanoyl-2-(9Z-octadecenoyl)-sn-glycero-3-phospho-(1'-sn-glycerol) + CoA. The catalysed reaction is 1-octadecanoyl-sn-glycero-3-phospho-(1'-sn-glycerol) + (9Z)-octadecenoyl-CoA = 1-octadecanoyl-2-(9Z-octadecenoyl)-sn-glycero-3-phospho-(1'-sn-glycerol) + CoA. It carries out the reaction 1-(9Z-octadecenoyl)-sn-glycero-3-phospho-(1'-sn-glycerol) + (9Z)-octadecenoyl-CoA = 1,2-di-(9Z-octadecenoyl)-sn-glycero-3-phospho-(1'-sn-glycerol) + CoA. The enzyme catalyses 1-hexadecanoyl-sn-glycero-3-phospho-(1D-myo-inositol) + dodecanoyl-CoA = 1-hexadecanoyl-2-dodecanoyl-sn-glycero-3-phospho-(1D-myo-inositol) + CoA. It catalyses the reaction 1',3'-bis-[1-acyl-sn-glycero-3-phospho]-glycerol + (9Z)-octadecenoyl-CoA = 1'-[1-acyl-2-(9Z)-octadecenoyl-sn-glycero-3-phospho],3'-[1-acyl,2-hydroxy-sn-glycero-3-phospho]-glycerol + CoA. The catalysed reaction is 1'-[1,2-diacyl-sn-glycero-3-phospho],3'-[1-acyl-sn-glycero-3-phospho]-glycerol + (9Z)-octadecenoyl-CoA = 1'-[1,2-diacyl-sn-glycero-3-phospho],3'-[1-acyl,2-(9Z)-octadecenoyl-sn-glycero-3-phospho]-glycerol + CoA. It carries out the reaction 1'-[1,2-diacyl-sn-glycero-3-phospho],3'-[1-acyl-sn-glycero-3-phospho]-glycerol + (9Z,12Z)-octadecadienoyl-CoA = 1'-[1,2-diacyl-sn-glycero-3-phospho],3'-[1-acyl,2-(9Z,12Z)-octadecadienoyl-sn-glycero-3-phospho]-glycerol + CoA. The enzyme catalyses 1'-[1,2-diacyl-sn-glycero-3-phospho],3'-[1-acyl-sn-glycero-3-phospho]-glycerol + dodecanoyl-CoA = 1'-[1,2-diacyl-sn-glycero-3-phospho],3'-[1-acyl,2-dodecanoyl-sn-glycero-3-phospho]-glycerol + CoA. It catalyses the reaction 1',3'-bis-[1-acyl-sn-glycero-3-phospho]-glycerol + dodecanoyl-CoA = 1'-[1-acyl-2-dodecanoyl-sn-glycero-3-phospho],3'-[1-acyl,2-hydroxy-sn-glycero-3-phospho]-glycerol + CoA. The catalysed reaction is a 1-acyl-sn-glycero-3-phosphate + (9Z)-octadecenoyl-CoA = a 1-acyl-2-(9Z-octadecenoyl)-sn-glycero-3-phosphate + CoA. It carries out the reaction 1',3'-bis-[1-acyl-sn-glycero-3-phospho]-glycerol + (9Z,12Z)-octadecadienoyl-CoA = 1'-[1-acyl-2-(9Z,12Z)-octadecadienoyl-sn-glycero-3-phospho],3'-[1-acyl,2-hydroxy-sn-glycero-3-phospho]-glycerol + CoA. The enzyme catalyses 1',3'-bis-[1-acyl-sn-glycero-3-phospho]-glycerol + hexadecanoyl-CoA = 1'-[1-acyl-2-hexadecanoyl-sn-glycero-3-phospho],3'-[1-acyl,2-hydroxy-sn-glycero-3-phospho]-glycerol + CoA. It catalyses the reaction 1',3'-bis-[1-acyl-sn-glycero-3-phospho]-glycerol + octadecanoyl-CoA = 1'-[1-acyl-2-octadecanoyl-sn-glycero-3-phospho],3'-[1-acyl,2-hydroxy-sn-glycero-3-phospho]-glycerol + CoA. The catalysed reaction is 1'-[1,2-diacyl-sn-glycero-3-phospho],3'-[1-acyl-sn-glycero-3-phospho]-glycerol + octanoyl-CoA = 1'-[1,2-diacyl-sn-glycero-3-phospho],3'-[1-acyl,2-octanoyl-sn-glycero-3-phospho]-glycerol + CoA. It carries out the reaction 1',3'-bis-[1-acyl-sn-glycero-3-phospho]-glycerol + octanoyl-CoA = 1'-[1-acyl-2-octanoyl-sn-glycero-3-phospho],3'-[1-acyl,2-hydroxy-sn-glycero-3-phospho]-glycerol + CoA. The enzyme catalyses 1'-[1,2-diacyl-sn-glycero-3-phospho],3'-[1-acyl-sn-glycero-3-phospho]-glycerol + hexadecanoyl-CoA = 1'-[1,2-diacyl-sn-glycero-3-phospho],3'-[1-acyl,2-hexadecanoyl-sn-glycero-3-phospho]-glycerol + CoA. It catalyses the reaction 1'-[1,2-diacyl-sn-glycero-3-phospho],3'-[1-acyl-sn-glycero-3-phospho]-glycerol + (5Z,8Z,11Z,14Z)-eicosatetraenoyl-CoA = 1'-[1,2-diacyl-sn-glycero-3-phospho],3'-[1-acyl,2-(5Z,8Z,11Z,14Z)-eicosatetraenoyl-sn-glycero-3-phospho]-glycerol + CoA. The catalysed reaction is 1',3'-bis-[1-acyl-sn-glycero-3-phospho]-glycerol + (5Z,8Z,11Z,14Z)-eicosatetraenoyl-CoA = 1'-[1-acyl-2-(5Z,8Z,11Z,14Z)-eicosatetraenoyl-sn-glycero-3-phospho],3'-[1-acyl,2-hydroxy-sn-glycero-3-phospho]-glycerol + CoA. It carries out the reaction a 1-acyl-sn-glycero-3-phospho-(1D-myo-inositol) + octadecanoyl-CoA = a 1-acyl-2-octadecanoyl-sn-glycero-3-phospho-(1D-myo-inositol) + CoA. The enzyme catalyses a 2-acyl-sn-glycero-3-phospho-D-myo-inositol + octadecanoyl-CoA = 1-octadecanoyl-2-acyl-sn-glycero-3-phospho-1D-myo-inositol + CoA. It functions in the pathway phospholipid metabolism; CDP-diacylglycerol biosynthesis; CDP-diacylglycerol from sn-glycerol 3-phosphate: step 2/3. Functionally, exhibits acyl-CoA:lysocardiolipin acyltransferase (ALCAT) activity; catalyzes the reacylation of lyso-cardiolipin to cardiolipin (CL), a key step in CL remodeling. Recognizes both monolysocardiolipin and dilysocardiolipin as substrates with a preference for linoleoyl-CoA and oleoyl-CoA as acyl donors. Also exhibits 1-acyl-sn-glycerol-3-phosphate acyltransferase activity (AGPAT) activity; converts 1-acyl-sn-glycerol-3- phosphate (lysophosphatidic acid or LPA) into 1,2-diacyl-sn-glycerol-3- phosphate (phosphatidic acid or PA) by incorporating an acyl moiety at the sn-2 position of the glycerol backbone. Possesses both lysophosphatidylinositol acyltransferase (LPIAT) and lysophosphatidylglycerol acyltransferase (LPGAT) activities. Required for establishment of the hematopoietic and endothelial lineages. This chain is Lysocardiolipin acyltransferase 1 (lclat1), found in Danio rerio (Zebrafish).